Here is a 383-residue protein sequence, read N- to C-terminus: Mannan endo-1,4-beta-mannosidase (383 aa).

The signal sequence occupies residues 1–35 (MRNARSTLITTAGMAFAVLGLLFALAGPSAGRAEA). One can recognise a CBM10 domain in the interval 339–377 (GGSTGGTAPNGYPYCVNGGASDPDGDGWGWENSRSCVVR).

The protein belongs to the glycosyl hydrolase 5 (cellulase A) family. As to quaternary structure, monomer.

It carries out the reaction Random hydrolysis of (1-&gt;4)-beta-D-mannosidic linkages in mannans, galactomannans and glucomannans.. In Streptomyces lividans, this protein is Mannan endo-1,4-beta-mannosidase (manA).